Consider the following 217-residue polypeptide: Insulin-like growth factor 2.S (217 aa).

The N-terminal stretch at 1–56 (MEQLSCKHRSSSVEAEAQLCRQTESRSTQLPRMSVMRHLFLLSITFLVYTLDSAKA) is a signal peptide. A b region spans residues 57–83 (YRATETLCGGELVDTLQFVCGDRGFYF). Disulfide bonds link Cys-64-Cys-103, Cys-76-Cys-116, and Cys-102-Cys-107. A c region spans residues 84-96 (STNNGRSNRRPNR). The interval 97–117 (GIVDVCCFKSCDLELLETYCA) is a. A d region spans residues 118-123 (KPTKNE). A propeptide spans 124–217 (RDVSTAPATA…LQQASEPSHN (94 aa)) (e peptide).

It belongs to the insulin family.

It localises to the secreted. Functionally, the insulin-like growth factors, isolated from plasma, are structurally and functionally related to insulin but have a much higher growth-promoting activity. Promotes anterior neural development. Acts as a ligand for integrin which is required for IGF2 signaling. The protein is Insulin-like growth factor 2.S of Xenopus laevis (African clawed frog).